The sequence spans 545 residues: Ribulokinase (545 aa).

The protein belongs to the ribulokinase family.

The catalysed reaction is D-ribulose + ATP = D-ribulose 5-phosphate + ADP + H(+). It carries out the reaction L-ribulose + ATP = L-ribulose 5-phosphate + ADP + H(+). Its pathway is carbohydrate degradation; L-arabinose degradation via L-ribulose; D-xylulose 5-phosphate from L-arabinose (bacterial route): step 2/3. This is Ribulokinase from Staphylococcus aureus (strain MSSA476).